The sequence spans 142 residues: Large-conductance mechanosensitive channel (142 aa).

Transmembrane regions (helical) follow at residues 10–30, 40–60, and 86–106; these read FAVKGNVVDLAVGVIIGGAFG, LIMPVVGLVFGKLDFSNLFVV, and GNFITVAVNFIILAFIIFMMV.

Belongs to the MscL family. In terms of assembly, homopentamer.

The protein localises to the cell inner membrane. Functionally, channel that opens in response to stretch forces in the membrane lipid bilayer. May participate in the regulation of osmotic pressure changes within the cell. The chain is Large-conductance mechanosensitive channel from Delftia acidovorans (strain DSM 14801 / SPH-1).